Here is a 304-residue protein sequence, read N- to C-terminus: MRFPKIPKRAVAATVGIVATSFTLASCVTNEEQGNPDGWEQIVPDPVPEIQAMVPEALAQRGVLTAGANPPFPPFEFKDSDGQIIGVEMDLVRAMAGVMGLEFSPQEQDFSLILPSVQAGTLDIGASGFTDNEERRENFDFIDFLFAGVQWAQATDRETPIDPENACGLTVAVQRTTVAETDDVRPRSAQCEAEGKEPITILSYETADTAATALILGRADALAADSPVSAWAAERSEGRIEVVGDMYLAAPFGFAFPLESDLTPAAAAAFQHLIDTGDYQRIMAQWGIEEGLLDEALINEQPLN.

Residues 1–26 form the signal peptide; the sequence is MRFPKIPKRAVAATVGIVATSFTLAS. Cysteine 27 carries N-palmitoyl cysteine lipidation. Cysteine 27 is lipidated: S-diacylglycerol cysteine.

Belongs to the bacterial solute-binding protein 3 family. The complex is probably composed of two ATP-binding proteins (ArgV), two transmembrane proteins (ArgU) and a solute-binding protein (ArgT).

The protein localises to the cell membrane. Its function is as follows. Part of the ABC transporter complex ArgTUV involved in L-arginine import. May also transport L-citrulline. Binds L-arginine and its molecular precursor L-citrulline, but not L-histidine, L-glutamate, L-glutamine, L-lysine or L-cysteine. The polypeptide is Arginine-binding protein ArgT (Corynebacterium glutamicum (strain ATCC 13032 / DSM 20300 / JCM 1318 / BCRC 11384 / CCUG 27702 / LMG 3730 / NBRC 12168 / NCIMB 10025 / NRRL B-2784 / 534)).